We begin with the raw amino-acid sequence, 225 residues long: Uridylate kinase (225 aa).

ATP is bound at residue 7–11 (KISGS). Gly44 is a binding site for UMP. Residues Gly45 and Arg49 each contribute to the ATP site. UMP contacts are provided by residues Asp66 and 114-120 (FQPGQST). Positions 147 and 150 each coordinate ATP.

It belongs to the UMP kinase family. Homohexamer.

The protein localises to the cytoplasm. The catalysed reaction is UMP + ATP = UDP + ADP. It functions in the pathway pyrimidine metabolism; CTP biosynthesis via de novo pathway; UDP from UMP (UMPK route): step 1/1. With respect to regulation, inhibited by UTP. Functionally, catalyzes the reversible phosphorylation of UMP to UDP. This Aeropyrum pernix (strain ATCC 700893 / DSM 11879 / JCM 9820 / NBRC 100138 / K1) protein is Uridylate kinase.